Here is a 94-residue protein sequence, read N- to C-terminus: Aspartyl/glutamyl-tRNA(Asn/Gln) amidotransferase subunit C (94 aa).

Belongs to the GatC family. Heterotrimer of A, B and C subunits.

The catalysed reaction is L-glutamyl-tRNA(Gln) + L-glutamine + ATP + H2O = L-glutaminyl-tRNA(Gln) + L-glutamate + ADP + phosphate + H(+). It catalyses the reaction L-aspartyl-tRNA(Asn) + L-glutamine + ATP + H2O = L-asparaginyl-tRNA(Asn) + L-glutamate + ADP + phosphate + 2 H(+). Functionally, allows the formation of correctly charged Asn-tRNA(Asn) or Gln-tRNA(Gln) through the transamidation of misacylated Asp-tRNA(Asn) or Glu-tRNA(Gln) in organisms which lack either or both of asparaginyl-tRNA or glutaminyl-tRNA synthetases. The reaction takes place in the presence of glutamine and ATP through an activated phospho-Asp-tRNA(Asn) or phospho-Glu-tRNA(Gln). The sequence is that of Aspartyl/glutamyl-tRNA(Asn/Gln) amidotransferase subunit C from Nitratidesulfovibrio vulgaris (strain ATCC 29579 / DSM 644 / CCUG 34227 / NCIMB 8303 / VKM B-1760 / Hildenborough) (Desulfovibrio vulgaris).